The sequence spans 747 residues: Protein MTSS 2 (747 aa).

The region spanning 1-252 is the IMD domain; that stretch reads METAEKECGA…EQVIKDLKGS (252 aa). Positions 135 to 159 form a coiled coil; the sequence is EIKKKSSDTLKLQKKARKELLGKGD. Low complexity-rich tracts occupy residues 256-284, 321-332, and 349-367; these read WSYQ…SSSS, SSVSSHDSGFVS, and TSQK…TCQS. Disordered regions lie at residues 256-302, 318-441, 457-522, and 543-599; these read WSYQ…YSPS, ARLS…EEVS, LEHQ…RNSN, and PTAG…PTVP. At threonine 260 the chain carries Phosphothreonine. Serine 264 carries the post-translational modification Phosphoserine. Over residues 368-378 the composition is skewed to polar residues; the sequence is VSECSSPTSDW. The span at 397–406 shows a compositional bias: basic and acidic residues; that stretch reads DRVELLRDTE. Serine 441 carries the phosphoserine modification. Low complexity predominate over residues 466–479; sequence SLQYSSGYSTQTTT. The span at 480-492 shows a compositional bias: polar residues; the sequence is PSCSEDTIPSQGS. 6 positions are modified to phosphoserine: serine 579, serine 601, serine 612, serine 624, serine 634, and serine 639. Disordered stretches follow at residues 638–664 and 691–720; these read LSLP…EDEQ and GQFP…DPPA. Residue threonine 643 is modified to Phosphothreonine. Low complexity-rich tracts occupy residues 646–659 and 696–707; these read GSPS…PGAG and PTALSATPTEET. The WH2 domain occupies 719-736; sequence PAEDMLVAIRRGVRLRRT.

The protein belongs to the MTSS family. In terms of assembly, interacts (via IMD domain) with RAC1; this interaction may be important to potentiate PDGF-induced RAC1 activation.

Its subcellular location is the cytoplasm. The protein resides in the cell projection. The protein localises to the ruffle. Functionally, involved in plasma membrane dynamics. Potentiated PDGF-mediated formation of membrane ruffles and lamellipodia in fibroblasts, acting via RAC1 activation. May function in actin bundling. This chain is Protein MTSS 2, found in Homo sapiens (Human).